The chain runs to 459 residues: Vacuolar amino acid transporter 5 (459 aa).

Transmembrane regions (helical) follow at residues 8–28, 33–53, 82–102, 131–151, 161–181, 206–226, 240–260, and 278–298; these read GVLT…PFAF, LMPG…GLLL, VVFD…YLII, FLDR…PLCF, ASMI…YHFV, LTTL…FSVI, IPIF…GTGY, and SIST…AFPL. The segment covering 335–351 has biased composition (polar residues); sequence FNSEDPQEAPTQQNNEE. Residues 335–354 are disordered; that stretch reads FNSEDPQEAPTQQNNEEPNL. A run of 3 helical transmembrane segments spans residues 364–384, 386–406, and 434–454; these read IITL…TSLA, VLAI…PGLF, and LSLF…IVFL.

This sequence belongs to the amino acid/polyamine transporter 2 family.

The protein resides in the vacuole membrane. In terms of biological role, probable amino acid transporter of unknown specificity. The polypeptide is Vacuolar amino acid transporter 5 (AVT5) (Saccharomyces cerevisiae (strain ATCC 204508 / S288c) (Baker's yeast)).